We begin with the raw amino-acid sequence, 114 residues long: Probable 4-amino-4-deoxy-L-arabinose-phosphoundecaprenol flippase subunit ArnE (114 aa).

Transmembrane regions (helical) follow at residues 41–61 (PWLIASVVALGSGMLLWIYLL), 64–84 (LPLSMAYPMLSINLVLVLIGS), and 94–114 (YHNWLGAGAIIIGALLLGGLL). Positions 53–112 (GMLLWIYLLQRLPLSMAYPMLSINLVLVLIGSRLFFHEQISYHNWLGAGAIIIGALLLGG) constitute an EamA domain.

This sequence belongs to the ArnE family. As to quaternary structure, heterodimer of ArnE and ArnF.

It localises to the cell inner membrane. Its pathway is bacterial outer membrane biogenesis; lipopolysaccharide biosynthesis. Functionally, translocates 4-amino-4-deoxy-L-arabinose-phosphoundecaprenol (alpha-L-Ara4N-phosphoundecaprenol) from the cytoplasmic to the periplasmic side of the inner membrane. In Aeromonas salmonicida (strain A449), this protein is Probable 4-amino-4-deoxy-L-arabinose-phosphoundecaprenol flippase subunit ArnE.